Here is a 166-residue protein sequence, read N- to C-terminus: PTS system glucose-specific EIIA component (166 aa).

Residues 34-138 (DPVFAQKMMG…SVISPIIITN (105 aa)) form the PTS EIIA type-1 domain. Residues histidine 71 and histidine 86 each coordinate Zn(2+). Catalysis depends on histidine 86, which acts as the Tele-phosphohistidine intermediate; for EIIA activity. Residue histidine 86 is modified to Phosphohistidine; by HPr.

Heterodimer with glycerol kinase (glpk). It depends on Zn(2+) as a cofactor.

The protein localises to the cytoplasm. The phosphoenolpyruvate-dependent sugar phosphotransferase system (sugar PTS), a major carbohydrate active transport system, catalyzes the phosphorylation of incoming sugar substrates concomitantly with their translocation across the cell membrane. The enzyme II complex composed of PtsG and Crr is involved in glucose transport. The polypeptide is PTS system glucose-specific EIIA component (crr) (Staphylococcus aureus (strain MRSA252)).